The primary structure comprises 185 residues: ATP synthase subunit delta (185 aa).

Belongs to the ATPase delta chain family. F-type ATPases have 2 components, F(1) - the catalytic core - and F(0) - the membrane proton channel. F(1) has five subunits: alpha(3), beta(3), gamma(1), delta(1), epsilon(1). CF(0) has four main subunits: a(1), b(1), b'(1) and c(10-14). The alpha and beta chains form an alternating ring which encloses part of the gamma chain. F(1) is attached to F(0) by a central stalk formed by the gamma and epsilon chains, while a peripheral stalk is formed by the delta, b and b' chains.

The protein resides in the cellular thylakoid membrane. Its function is as follows. F(1)F(0) ATP synthase produces ATP from ADP in the presence of a proton or sodium gradient. F-type ATPases consist of two structural domains, F(1) containing the extramembraneous catalytic core and F(0) containing the membrane proton channel, linked together by a central stalk and a peripheral stalk. During catalysis, ATP synthesis in the catalytic domain of F(1) is coupled via a rotary mechanism of the central stalk subunits to proton translocation. In terms of biological role, this protein is part of the stalk that links CF(0) to CF(1). It either transmits conformational changes from CF(0) to CF(1) or is implicated in proton conduction. The polypeptide is ATP synthase subunit delta (Picosynechococcus sp. (strain ATCC 27264 / PCC 7002 / PR-6) (Agmenellum quadruplicatum)).